A 204-amino-acid polypeptide reads, in one-letter code: Calexcitin-1 (204 aa).

3 consecutive EF-hand domains span residues 25 to 61, 75 to 110, and 115 to 150; these read FLVK…VRDI, SLAA…TDAK, and WFKD…YGFD. Ca(2+)-binding residues include aspartate 39, asparagine 41, serine 43, glutamine 45, aspartate 50, aspartate 88, aspartate 90, aspartate 92, glutamate 99, aspartate 128, serine 130, aspartate 132, and glutamate 139.

The protein is Calexcitin-1 (cex-1) of Caenorhabditis elegans.